The primary structure comprises 84 residues: UPF0457 protein BCE33L2961 (84 aa).

This sequence belongs to the UPF0457 family.

The sequence is that of UPF0457 protein BCE33L2961 from Bacillus cereus (strain ZK / E33L).